Reading from the N-terminus, the 735-residue chain is Alpha-adducin (735 aa).

M1 carries the post-translational modification N-acetylmethionine. Positions 1–11 (MNGDTRAAVVT) are enriched in low complexity. Residues 1–21 (MNGDTRAAVVTSPPPTTAPHK) are disordered. Phosphoserine is present on S12. S59 carries the phosphoserine; by PKA modification. Phosphoserine is present on S64. A Phosphothreonine modification is found at T331. Residues S334, S353, and S355 each carry the phosphoserine modification. Residue T358 is modified to Phosphothreonine. Phosphoserine occurs at positions 364 and 366. Position 408 is a phosphoserine; by PKA (S408). Disordered regions lie at residues 418–486 (GHSF…SAVP) and 576–735 (RREV…KSDS). At S427 the chain carries Phosphoserine. A Phosphothreonine modification is found at T429. Residue S431 is modified to Phosphoserine. S436 carries the phosphoserine; by PKA modification. Residue T445 is modified to Phosphothreonine; by ROCK2. Phosphoserine occurs at positions 464 and 465. T480 bears the Phosphothreonine; by ROCK2 mark. S481 carries the post-translational modification Phosphoserine; by PKA. The segment covering 576 to 601 (RREVERKQKGSEENLDETREQKEKSP) has biased composition (basic and acidic residues). A phosphoserine mark is found at S586, S600, and S605. T610 carries the phosphothreonine modification. Residue S613 is modified to Phosphoserine. T614 is subject to Phosphothreonine. Residues 678–712 (EPASASAPGAEEVASPATEEGSPMDPGSDGSPGKS) are compositionally biased toward low complexity. Phosphoserine is present on residues S705, S708, and S712. A compositionally biased stretch (basic residues) spans 713–735 (PSKKKKKFRTPSFLKKSKKKSDS). At S714 the chain carries Phosphoserine; by PKC. The interval 715–732 (KKKKKFRTPSFLKKSKKK) is interaction with calmodulin. Position 724 is a phosphoserine; by PKA and PKC (S724).

This sequence belongs to the aldolase class II family. Adducin subfamily. In terms of assembly, heterodimer of an alpha and a beta subunit or an alpha and a gamma subunit.

The protein resides in the cytoplasm. It localises to the cytoskeleton. It is found in the cell membrane. Membrane-cytoskeleton-associated protein that promotes the assembly of the spectrin-actin network. Binds to calmodulin. This chain is Alpha-adducin (Add1), found in Rattus norvegicus (Rat).